The chain runs to 187 residues: Casparian strip membrane protein 1 (187 aa).

The span at 1-10 (MKGSSEHGET) shows a compositional bias: basic and acidic residues. Residues 1 to 20 (MKGSSEHGETSKQAPLGSSR) form a disordered region. Residues 1–27 (MKGSSEHGETSKQAPLGSSRGVSKGVS) lie on the Cytoplasmic side of the membrane. The helical transmembrane segment at 28-48 (VLDLILRFIAIIGTLASAIAM) threads the bilayer. At 49–75 (GTTNETLPFFTQFIRFKAQYSDLPTLT) the chain is on the extracellular side. A glycan (N-linked (GlcNAc...) asparagine) is linked at N52. Residues 76 to 96 (FFVVANSIVCAYLTLSLPLSI) traverse the membrane as a helical segment. The Cytoplasmic segment spans residues 97–115 (VHIIRSRAKYSRLLLVVLD). The chain crosses the membrane as a helical span at residues 116–136 (AAMLALVTPGASAAAAIVYLA). Over 137-162 (HKGNVRANWLAICQQFDSFCERISGC) the chain is Extracellular. The helical transmembrane segment at 163 to 183 (LIGSFGAMVMLVLLLLLSAIA) threads the bilayer. The Cytoplasmic portion of the chain corresponds to 184–187 (LARR).

It belongs to the Casparian strip membrane proteins (CASP) family. As to quaternary structure, homodimer and heterodimers.

It localises to the cell membrane. Its function is as follows. Regulates membrane-cell wall junctions and localized cell wall deposition. Required for establishment of the Casparian strip membrane domain (CSD) and the subsequent formation of Casparian strips, a cell wall modification of the root endodermis that determines an apoplastic barrier between the intraorganismal apoplasm and the extraorganismal apoplasm and prevents lateral diffusion. This chain is Casparian strip membrane protein 1, found in Zea mays (Maize).